We begin with the raw amino-acid sequence, 523 residues long: 2-isopropylmalate synthase (523 aa).

The region spanning 5 to 267 (VIIFDTTLRD…HTAINHQEIW (263 aa)) is the Pyruvate carboxyltransferase domain. The Mn(2+) site is built by Asp14, His202, His204, and Asn238. Positions 392–523 (RLDYFSVQSS…QHNENNKETV (132 aa)) are regulatory domain.

The protein belongs to the alpha-IPM synthase/homocitrate synthase family. LeuA type 1 subfamily. Homodimer. Mn(2+) is required as a cofactor.

It localises to the cytoplasm. It catalyses the reaction 3-methyl-2-oxobutanoate + acetyl-CoA + H2O = (2S)-2-isopropylmalate + CoA + H(+). Its pathway is amino-acid biosynthesis; L-leucine biosynthesis; L-leucine from 3-methyl-2-oxobutanoate: step 1/4. Catalyzes the condensation of the acetyl group of acetyl-CoA with 3-methyl-2-oxobutanoate (2-ketoisovalerate) to form 3-carboxy-3-hydroxy-4-methylpentanoate (2-isopropylmalate). The polypeptide is 2-isopropylmalate synthase (Shigella dysenteriae serotype 1 (strain Sd197)).